Consider the following 125-residue polypeptide: Small ribosomal subunit protein bS6 (125 aa).

Residues 96–125 (VTAPSPMMREEKAKSAPQPAEEAKETTLAT) are disordered. Over residues 116–125 (EEAKETTLAT) the composition is skewed to basic and acidic residues.

Belongs to the bacterial ribosomal protein bS6 family.

In terms of biological role, binds together with bS18 to 16S ribosomal RNA. The polypeptide is Small ribosomal subunit protein bS6 (Nitrosospira multiformis (strain ATCC 25196 / NCIMB 11849 / C 71)).